Here is a 371-residue protein sequence, read N- to C-terminus: MLMASTTSAVPGHPSLPSLPSNSSQERPLDTRDPLLARAELALLSIVFVAVALSNGLVLAALARRGRRGHWAPIHVFIGHLCLADLAVALFQVLPQLAWKATDRFRGPDALCRAVKYLQMVGMYASSYMILAMTLDRHRAICRPMLAYRHGSGAHWNRPVLVAWAFSLLLSLPQLFIFAQRNVEGGSGVTDCWACFAEPWGRRTYVTWIALMVFVAPTLGIAACQVLIFREIHASLVPGPSERPGGRRRGRRTGSPGEGAHVSAAVAKTVRMTLVIVVVYVLCWAPFFLVQLWAAWDPEAPLEGAPFVLLMLLASLNSCTNPWIYASFSSSVSSELRSLLCCARGRTPPSLGPQDESCTTASSSLAKDTSS.

The tract at residues 1 to 30 (MLMASTTSAVPGHPSLPSLPSNSSQERPLD) is disordered. The Extracellular portion of the chain corresponds to 1–38 (MLMASTTSAVPGHPSLPSLPSNSSQERPLDTRDPLLAR). Over residues 15–24 (SLPSLPSNSS) the composition is skewed to low complexity. N-linked (GlcNAc...) asparagine glycosylation is present at Asn-22. Residues 39–63 (AELALLSIVFVAVALSNGLVLAALA) form a helical membrane-spanning segment. Over 64–77 (RRGRRGHWAPIHVF) the chain is Cytoplasmic. A helical membrane pass occupies residues 78-98 (IGHLCLADLAVALFQVLPQLA). The Extracellular segment spans residues 99–113 (WKATDRFRGPDALCR). The chain crosses the membrane as a helical span at residues 114–135 (AVKYLQMVGMYASSYMILAMTL). The Cytoplasmic portion of the chain corresponds to 136-159 (DRHRAICRPMLAYRHGSGAHWNRP). A helical membrane pass occupies residues 160–180 (VLVAWAFSLLLSLPQLFIFAQ). The Extracellular portion of the chain corresponds to 181 to 200 (RNVEGGSGVTDCWACFAEPW). Residues 201–220 (GRRTYVTWIALMVFVAPTLG) traverse the membrane as a helical segment. Residues 221 to 271 (IAACQVLIFREIHASLVPGPSERPGGRRRGRRTGSPGEGAHVSAAVAKTVR) are Cytoplasmic-facing. Positions 240-259 (PSERPGGRRRGRRTGSPGEG) are disordered. A helical transmembrane segment spans residues 272–293 (MTLVIVVVYVLCWAPFFLVQLW). Over 294-308 (AAWDPEAPLEGAPFV) the chain is Extracellular. The chain crosses the membrane as a helical span at residues 309–328 (LLMLLASLNSCTNPWIYASF). The Cytoplasmic segment spans residues 329-371 (SSSVSSELRSLLCCARGRTPPSLGPQDESCTTASSSLAKDTSS). S-palmitoyl cysteine attachment occurs at residues Cys-341 and Cys-342. A disordered region spans residues 349-371 (PSLGPQDESCTTASSSLAKDTSS). Positions 356–371 (ESCTTASSSLAKDTSS) are enriched in polar residues.

It belongs to the G-protein coupled receptor 1 family. Vasopressin/oxytocin receptor subfamily. As to quaternary structure, interacts with ARRDC4. Identified in a complex containing at least ARRDC4, V2R and HGS. Interacts with TMEM147. As to expression, kidney.

It is found in the cell membrane. Functionally, receptor for arginine vasopressin. The activity of this receptor is mediated by G proteins which activate adenylate cyclase. Involved in renal water reabsorption. This Homo sapiens (Human) protein is Vasopressin V2 receptor (AVPR2).